A 74-amino-acid polypeptide reads, in one-letter code: Protein DELETION OF SUV3 SUPPRESSOR 1(I) (74 aa).

The interval 35–74 (EKEEVKEVSQQWEDDWDDDDVNDDFSRQLRKELENGTDKK) is disordered. Positions 46-57 (WEDDWDDDDVND) are enriched in acidic residues. Positions 58 to 74 (DFSRQLRKELENGTDKK) are enriched in basic and acidic residues.

Belongs to the DSS1/SEM1 family. Part of the 26S proteasome. Interacts with BRCA2A and BRCA2B. Interacts with UCH1 and UCH2. Can form a tripartite complex with both RAD51 and BRCA2B or both DMC1 and BRCA2B.

Subunit of the 26S proteasome which plays a role in ubiquitin-dependent proteolysis. The chain is Protein DELETION OF SUV3 SUPPRESSOR 1(I) from Arabidopsis thaliana (Mouse-ear cress).